Consider the following 203-residue polypeptide: RNA annealing protein YRA2 (203 aa).

An N-acetylmethionine modification is found at Met1. Disordered regions lie at residues 1–60 and 137–203; these read MDKA…REEP and QPQR…YMKG. Residues 11–20 are compositionally biased toward polar residues; it reads NSHTDSSSNH. The span at 47 to 60 shows a compositional bias: basic and acidic residues; that stretch reads SRSKDRLYREREEP. An RRM domain is found at 64-138; sequence KRIRISKIPL…AKIEVEIYQP (75 aa). 2 stretches are compositionally biased toward basic residues: residues 139-153 and 163-180; these read QRKH…RRKQ and PGSH…KNKG.

Belongs to the YRA1 family. In terms of assembly, associates with mRNPs. Interacts with YRA1.

It is found in the nucleus. Involved in export of poly(A) mRNAs from the nucleus. Recruited to the coding sequences as well as poly-A sites of active genes. The protein is RNA annealing protein YRA2 (YRA2) of Saccharomyces cerevisiae (strain Lalvin EC1118 / Prise de mousse) (Baker's yeast).